The following is a 1177-amino-acid chain: Dynein axonemal assembly factor 9 (1177 aa).

A disordered region spans residues 1–27 (MDVYPPRRQGLPRARSPGGSSRGSPSV). Over residues 11 to 27 (LPRARSPGGSSRGSPSV) the composition is skewed to low complexity.

As to quaternary structure, interacts with ARL3.

In terms of biological role, may act as an effector for ARL3. The protein is Dynein axonemal assembly factor 9 of Homo sapiens (Human).